Here is a 605-residue protein sequence, read N- to C-terminus: Zinc metalloproteinase nas-34 (605 aa).

Residues 1 to 19 (MVSYWPVLIVLCLLPICHA) form the signal peptide. The propeptide occupies 20 to 124 (KSYFADFVNG…EFLYAIRGKR (105 aa)). The region spanning 124-322 (RSMTSFLSER…VKRINFAYCN (199 aa)) is the Peptidase M12A domain. Intrachain disulfides connect cysteine 165-cysteine 321 and cysteine 191-cysteine 211. Histidine 219 is a Zn(2+) binding site. The active site involves glutamate 220. Zn(2+) is bound by residues histidine 223 and histidine 229. An EGF-like domain is found at 317 to 357 (NFAYCNSTCSNYLDCQNGGYINPNDCNNCKCPPGFGGQLCD). Asparagine 322 carries N-linked (GlcNAc...) asparagine glycosylation. 4 cysteine pairs are disulfide-bonded: cysteine 325-cysteine 345, cysteine 347-cysteine 356, cysteine 366-cysteine 388, and cysteine 415-cysteine 436. The 104-residue stretch at 366-469 (CGAGDITATS…ARFSLNYRYD (104 aa)) folds into the CUB domain. Residues 479–526 (TTTSTTTTTAPITVPTVSPTTTTTRQTTTTARTSTTTTTTQAPPTTTT) form a disordered region. Residues 525–566 (TTSTSQCASWSACSAQCGGCGTQSRRCGTYVETVYCNTNPCT) enclose the TSP type-1 domain. Intrachain disulfides connect cysteine 531–cysteine 551, cysteine 537–cysteine 560, and cysteine 541–cysteine 565.

Zn(2+) serves as cofactor. As to expression, expressed in hypodermal cells. First expressed in the dorsal and lateral surface area of the middle and posterior region of embryos. At later stages, it localizes to lateral surface regions, probably corresponding to hypodermal seam cells. In L1 larvae, it is expressed in seam cells and in a few cells anterior to the nerve ring.

It is found in the secreted. Functionally, metalloprotease. Required for normal hatching and migration of neuroblasts. May act by degrading eggshell proteins at hatching. The sequence is that of Zinc metalloproteinase nas-34 (hch-1) from Caenorhabditis elegans.